Here is a 594-residue protein sequence, read N- to C-terminus: UvrABC system protein C (594 aa).

In terms of domain architecture, GIY-YIG spans 14-91; the sequence is DSPGCYLHKD…IQENMPKYNI (78 aa). One can recognise a UVR domain in the interval 196-231; it reads DKIIDDLRSKMLEASHNQEFERAAEYRDLISGIATM.

This sequence belongs to the UvrC family. Interacts with UvrB in an incision complex.

The protein resides in the cytoplasm. Its function is as follows. The UvrABC repair system catalyzes the recognition and processing of DNA lesions. UvrC both incises the 5' and 3' sides of the lesion. The N-terminal half is responsible for the 3' incision and the C-terminal half is responsible for the 5' incision. The protein is UvrABC system protein C of Streptococcus equi subsp. equi (strain 4047).